We begin with the raw amino-acid sequence, 427 residues long: 3-phosphoshikimate 1-carboxyvinyltransferase (427 aa).

Residues lysine 22, serine 23, and arginine 27 each coordinate 3-phosphoshikimate. Lysine 22 provides a ligand contact to phosphoenolpyruvate. 2 residues coordinate phosphoenolpyruvate: glycine 96 and arginine 124. Serine 169, serine 170, glutamine 171, serine 197, aspartate 313, asparagine 336, and lysine 340 together coordinate 3-phosphoshikimate. Glutamine 171 is a phosphoenolpyruvate binding site. Aspartate 313 (proton acceptor) is an active-site residue. Residues arginine 344, arginine 386, and lysine 411 each contribute to the phosphoenolpyruvate site.

This sequence belongs to the EPSP synthase family. In terms of assembly, monomer.

The protein resides in the cytoplasm. The catalysed reaction is 3-phosphoshikimate + phosphoenolpyruvate = 5-O-(1-carboxyvinyl)-3-phosphoshikimate + phosphate. The protein operates within metabolic intermediate biosynthesis; chorismate biosynthesis; chorismate from D-erythrose 4-phosphate and phosphoenolpyruvate: step 6/7. Its function is as follows. Catalyzes the transfer of the enolpyruvyl moiety of phosphoenolpyruvate (PEP) to the 5-hydroxyl of shikimate-3-phosphate (S3P) to produce enolpyruvyl shikimate-3-phosphate and inorganic phosphate. This chain is 3-phosphoshikimate 1-carboxyvinyltransferase, found in Citrobacter koseri (strain ATCC BAA-895 / CDC 4225-83 / SGSC4696).